The primary structure comprises 371 residues: Jasmonate-induced oxygenase 2 (371 aa).

Residues 219-320 enclose the Fe2OG dioxygenase domain; the sequence is NIGACLRVNY…RVSLAFFYNP (102 aa). Arg225 serves as a coordination point for jasmonate. 2-oxoglutarate-binding residues include Asn227 and Tyr229. Positions 244, 246, and 301 each coordinate Fe cation. Arg311 and Ser313 together coordinate 2-oxoglutarate. Jasmonate contacts are provided by Arg350 and Arg354.

It belongs to the iron/ascorbate-dependent oxidoreductase family. L-ascorbate serves as cofactor. Requires Fe(2+) as cofactor.

It catalyses the reaction jasmonate + 2-oxoglutarate + O2 = (1R,2R)-12-hydroxyjasmonate + succinate + CO2. Functionally, 2-oxoglutarate-dependent dioxygenase involved in the oxidation of jasmonate (JA), a stress-induced phytohormone synthesized in response to attack by pathogens and herbivores, which triggers the activation of defense responses via the JA-mediated signaling pathway. Converts JA to 12-hydroxyjasmonate (12OH-JA), an inactive form of JA. Is specific to free JA, and cannot oxidize the bioactive form jasmonoyl-L-isoleucine (JA-Ile) or other JA-amino acid conjugates. Prevents over-accumulation of JA and indirectly its bioactive form JA-Ile under stress response. Acts as a negative regulator of JA-mediated defense signaling, by contributing to 12OH-JA accumulation, which represses JA defense responses upon infection by the fungal pathogen Botrytis cinerea. Acts as a negative regulator of JA-mediated defense responses upon infestation by the herbivorous caterpillar Mamestra brassicae. May be involved in the catabolism of cytotoxic polycyclic aromatic hydrocarbons (PAHs). The chain is Jasmonate-induced oxygenase 2 from Arabidopsis thaliana (Mouse-ear cress).